Reading from the N-terminus, the 264-residue chain is Putative hydro-lyase Cgl2544/cg2803 (264 aa).

The protein belongs to the D-glutamate cyclase family.

This Corynebacterium glutamicum (strain ATCC 13032 / DSM 20300 / JCM 1318 / BCRC 11384 / CCUG 27702 / LMG 3730 / NBRC 12168 / NCIMB 10025 / NRRL B-2784 / 534) protein is Putative hydro-lyase Cgl2544/cg2803.